Consider the following 347-residue polypeptide: UDP-N-acetylenolpyruvoylglucosamine reductase (347 aa).

The FAD-binding PCMH-type domain occupies 23–197 (LPARAARLLR…LRVRFRLPQA (175 aa)). R174 is a catalytic residue. Catalysis depends on S247, which acts as the Proton donor. Residue E343 is part of the active site.

The protein belongs to the MurB family. The cofactor is FAD.

The protein localises to the cytoplasm. It carries out the reaction UDP-N-acetyl-alpha-D-muramate + NADP(+) = UDP-N-acetyl-3-O-(1-carboxyvinyl)-alpha-D-glucosamine + NADPH + H(+). It participates in cell wall biogenesis; peptidoglycan biosynthesis. In terms of biological role, cell wall formation. The sequence is that of UDP-N-acetylenolpyruvoylglucosamine reductase from Azoarcus sp. (strain BH72).